The sequence spans 446 residues: Protein dyf-7 (446 aa).

An N-terminal signal peptide occupies residues methionine 1–alanine 24. Residues aspartate 35–serine 295 form the ZP domain. Cysteine 211 and cysteine 273 form a disulfide bridge. Residues isoleucine 377 to isoleucine 397 form a helical membrane-spanning segment.

As to quaternary structure, monomer under reducing conditions. Homodimer under non-reducing conditions. May also form higher order oligomers. Proteolytically cleaved and secreted in vitro. In terms of tissue distribution, in the embryo, expressed in the excretory cell and, during dendrite formation, in the non-neuronal cells surrounding the sensory neurons, including hypodermal cells.

The protein localises to the cell membrane. It is found in the cell projection. The protein resides in the dendrite. It localises to the secreted. Required for permeability of amphid and phasmid neurons to external dyes, chemotaxis to ammonium chloride, avoidance of high osmotic stimuli, male mating and dauer formation. Along with dex-1, enables neurite growth and maintenance by anchoring amphid dendritic tips during neuron cell body migration in embryonic and larval development. The chain is Protein dyf-7 from Caenorhabditis elegans.